Reading from the N-terminus, the 732-residue chain is Catalase-peroxidase (732 aa).

The interval 1–23 (MSEQSKCPVTGRTAGHPVAGGGM) is disordered. The segment at residues 97-220 (WHSAGTYRTS…LAAVQMGLIY (124 aa)) is a cross-link (tryptophyl-tyrosyl-methioninium (Trp-Tyr) (with M-246)). His98 (proton acceptor) is an active-site residue. The segment at residues 220 to 246 (YVNPEGPDGNPDPVAAGRDIRETFARM) is a cross-link (tryptophyl-tyrosyl-methioninium (Tyr-Met) (with W-97)). His261 lines the heme b pocket.

The protein belongs to the peroxidase family. Peroxidase/catalase subfamily. Homodimer or homotetramer. Heme b serves as cofactor. Post-translationally, formation of the three residue Trp-Tyr-Met cross-link is important for the catalase, but not the peroxidase activity of the enzyme.

It catalyses the reaction H2O2 + AH2 = A + 2 H2O. The catalysed reaction is 2 H2O2 = O2 + 2 H2O. In terms of biological role, bifunctional enzyme with both catalase and broad-spectrum peroxidase activity. This chain is Catalase-peroxidase, found in Chlorobium limicola (strain DSM 245 / NBRC 103803 / 6330).